An 86-amino-acid chain; its full sequence is Omega-theraphotoxin-Hhn1d (86 aa).

An N-terminal signal peptide occupies residues 1 to 21 (MKSIVFVALFGLALLAVVCSA). Positions 22–50 (SEDAHKELLKEVVRAMVVDKTDAVQAEER) are excised as a propeptide. 3 disulfide bridges follow: cysteine 52/cysteine 66, cysteine 59/cysteine 71, and cysteine 65/cysteine 78.

The protein belongs to the neurotoxin 10 (Hwtx-1) family. 17 (Hntx-9) subfamily. Expressed by the venom gland.

It localises to the secreted. Functionally, ion channel inhibitor. The sequence is that of Omega-theraphotoxin-Hhn1d from Cyriopagopus hainanus (Chinese bird spider).